Consider the following 252-residue polypeptide: MNVKVYNLDGSEKGDIELPAVFEAEYRPDLIKRAVISSLTAKLQPKGCDAFAGYRTSAKSIGKGHGKARVRRTAQGAGAFVPQAVGGRRAHPPKVEKILFERINRKEKLKALASAIAASANPEIVSARGHKIEGVPSLPLVVNAEFESLVKTKEVLEVFKTLKLDADLERAKDGVKIRAGRGKLRGRKYIKPKSVLVVVGDACEAITASRNLAGVDVITANDLSAIHIAPGTMAGRLTLWTENAIEKINGRF.

This sequence belongs to the universal ribosomal protein uL4 family. In terms of assembly, part of the 50S ribosomal subunit.

Its function is as follows. One of the primary rRNA binding proteins, this protein initially binds near the 5'-end of the 23S rRNA. It is important during the early stages of 50S assembly. It makes multiple contacts with different domains of the 23S rRNA in the assembled 50S subunit and ribosome. Functionally, forms part of the polypeptide exit tunnel. The polypeptide is Large ribosomal subunit protein uL4 (Methanococcus maripaludis (strain DSM 14266 / JCM 13030 / NBRC 101832 / S2 / LL)).